Reading from the N-terminus, the 83-residue chain is Cytochrome b559 subunit alpha (83 aa).

The helical transmembrane segment at Val21–Trp35 threads the bilayer. Residue His23 coordinates heme.

It belongs to the PsbE/PsbF family. In terms of assembly, heterodimer of an alpha subunit and a beta subunit. PSII is composed of 1 copy each of membrane proteins PsbA, PsbB, PsbC, PsbD, PsbE, PsbF, PsbH, PsbI, PsbJ, PsbK, PsbL, PsbM, PsbT, PsbX, PsbY, PsbZ, Psb30/Ycf12, at least 3 peripheral proteins of the oxygen-evolving complex and a large number of cofactors. It forms dimeric complexes. It depends on heme b as a cofactor.

It localises to the plastid. The protein localises to the chloroplast thylakoid membrane. In terms of biological role, this b-type cytochrome is tightly associated with the reaction center of photosystem II (PSII). PSII is a light-driven water:plastoquinone oxidoreductase that uses light energy to abstract electrons from H(2)O, generating O(2) and a proton gradient subsequently used for ATP formation. It consists of a core antenna complex that captures photons, and an electron transfer chain that converts photonic excitation into a charge separation. The chain is Cytochrome b559 subunit alpha from Mesembryanthemum crystallinum (Common ice plant).